A 294-amino-acid chain; its full sequence is Urease accessory protein UreD 1 (294 aa).

The disordered stretch occupies residues 1–20 (MALSLDDLPEKPAPAEPVSA).

The protein belongs to the UreD family. In terms of assembly, ureD, UreF and UreG form a complex that acts as a GTP-hydrolysis-dependent molecular chaperone, activating the urease apoprotein by helping to assemble the nickel containing metallocenter of UreC. The UreE protein probably delivers the nickel.

Its subcellular location is the cytoplasm. Functionally, required for maturation of urease via the functional incorporation of the urease nickel metallocenter. The polypeptide is Urease accessory protein UreD 1 (Methylorubrum populi (strain ATCC BAA-705 / NCIMB 13946 / BJ001) (Methylobacterium populi)).